We begin with the raw amino-acid sequence, 842 residues long: Protein translocase subunit SecA (842 aa).

ATP contacts are provided by residues Gln91, 109–113, and Asp498; that span reads GEGKT. Basic and acidic residues predominate over residues 798–824; the sequence is QGQHVSAEDGKEKVKPQPVVKDNHIGR. The tract at residues 798–827 is disordered; the sequence is QGQHVSAEDGKEKVKPQPVVKDNHIGRNDP. Residues Cys828, Cys830, Cys839, and Cys840 each coordinate Zn(2+).

This sequence belongs to the SecA family. As to quaternary structure, monomer and homodimer. Part of the essential Sec protein translocation apparatus which comprises SecA, SecYEG and auxiliary proteins SecDF. Other proteins may also be involved. Zn(2+) serves as cofactor.

The protein resides in the cell membrane. It localises to the cytoplasm. It carries out the reaction ATP + H2O + cellular proteinSide 1 = ADP + phosphate + cellular proteinSide 2.. In terms of biological role, part of the Sec protein translocase complex. Interacts with the SecYEG preprotein conducting channel. Has a central role in coupling the hydrolysis of ATP to the transfer of proteins into and across the cell membrane, serving as an ATP-driven molecular motor driving the stepwise translocation of polypeptide chains across the membrane. This chain is Protein translocase subunit SecA, found in Staphylococcus carnosus (strain TM300).